The primary structure comprises 192 residues: uncharacterized protein (192 aa).

One can recognise a Nudix hydrolase domain in the interval 29-160 (QRQAAVLIPV…PLDVYRRGNS (132 aa)). A Nudix box motif is present at residues 67-89 (GAVDSTDASLIAAALREAQEEVA). 2 residues coordinate Mg(2+): Glu83 and Glu87.

The protein belongs to the Nudix hydrolase family. PCD1 subfamily. The cofactor is Mn(2+). Mg(2+) serves as cofactor.

Its function is as follows. Probably mediates the hydrolysis of some nucleoside diphosphate derivatives. This is an uncharacterized protein from Salmonella choleraesuis (strain SC-B67).